Consider the following 147-residue polypeptide: Hemoglobin subunit delta (147 aa).

In terms of domain architecture, Globin spans 3 to 147 (NLTAAEKTQV…VANALAHKYH (145 aa)). The heme b site is built by H64 and H93.

Belongs to the globin family. In terms of assembly, heterotetramer of two delta chains and two alpha chains. Red blood cells.

This chain is Hemoglobin subunit delta (HBD), found in Elephas maximus (Indian elephant).